We begin with the raw amino-acid sequence, 97 residues long: Nucleoid-associated protein HPP12_0031 (97 aa).

It belongs to the YbaB/EbfC family. As to quaternary structure, homodimer.

Its subcellular location is the cytoplasm. It is found in the nucleoid. Binds to DNA and alters its conformation. May be involved in regulation of gene expression, nucleoid organization and DNA protection. In Helicobacter pylori (strain P12), this protein is Nucleoid-associated protein HPP12_0031.